A 500-amino-acid polypeptide reads, in one-letter code: Recombining binding protein suppressor of hairless (500 aa).

The disordered stretch occupies residues 1–30; that stretch reads MDHTEGSPAEEPPAHAPSPGKFGERPPPKR. DNA-binding regions lie at residues 57–67 and 165–170; these read QKSYGNEKRFF and SKPSKK. Lys-175 is subject to N6-acetyllysine. The segment at 192 to 197 is DNA-binding; the sequence is RLRSQT. The IPT/TIG domain occupies 355–445; sequence PVVESLQLNG…YSTSLTFTYT (91 aa). The segment covering 465–481 has biased composition (polar residues); that stretch reads SSQVPPNESNTNSEGSY. The interval 465 to 500 is disordered; sequence SSQVPPNESNTNSEGSYTNASTNSTSVTSSTATVVS. Residues 482-500 show a composition bias toward low complexity; that stretch reads TNASTNSTSVTSSTATVVS.

It belongs to the Su(H) family. As to quaternary structure, interacts with activated NOTCH1, NOTCH2 or NOTCH3. Interacts with MINT/SHARP. This interaction may mediate the recruitment of large corepressor complexes containing proteins such as HDAC1, HDAC2, NCOR2, SAP30, FHL1/KYOT2 and CIR1. Interacts with EP300, MAML1 and PTF1A. Interacts with RITA1/C12orf52, leading to nuclear export, prevent the interaction between RBPJ and NICD product and subsequent down-regulation of the Notch signaling pathway. Interacts with SNW1. Interacts with CHCHD2 and CXXC5. Interacts with BEND6 (via BEN domain). Interacts with NKAPL. Interacts with ZMIZ1. Interacts with RBM15. Interacts with L3MBTL3 and KDM1A; the interaction with KDM1A is weaker in the absence of L3MBTL3 and the interaction with L3MBTL3 is impaired by Notch-derived peptide containing the intracellular domain (NICD). (Microbial infection) Interacts with EBV EBNA2. Interacts with EBV EBNA3. Interacts with EBV EBNA4. Interacts with EBV EBNA6 (via N-terminus).

It is found in the nucleus. It localises to the cytoplasm. Transcriptional regulator that plays a central role in Notch signaling, a signaling pathway involved in cell-cell communication that regulates a broad spectrum of cell-fate determinations. Acts as a transcriptional repressor when it is not associated with Notch proteins. When associated with some NICD product of Notch proteins (Notch intracellular domain), it acts as a transcriptional activator that activates transcription of Notch target genes. Probably represses or activates transcription via the recruitment of chromatin remodeling complexes containing histone deacetylase or histone acetylase proteins, respectively. Specifically binds to the immunoglobulin kappa-type J segment recombination signal sequence. Binds specifically to methylated DNA. Binds to the oxygen responsive element of COX4I2 and activates its transcription under hypoxia conditions (4% oxygen). Negatively regulates the phagocyte oxidative burst in response to bacterial infection by repressing transcription of NADPH oxidase subunits. This Homo sapiens (Human) protein is Recombining binding protein suppressor of hairless.